The following is a 130-amino-acid chain: Small ribosomal subunit protein uS8 (130 aa).

This sequence belongs to the universal ribosomal protein uS8 family. Part of the 30S ribosomal subunit. Contacts proteins S5 and S12.

One of the primary rRNA binding proteins, it binds directly to 16S rRNA central domain where it helps coordinate assembly of the platform of the 30S subunit. This chain is Small ribosomal subunit protein uS8, found in Buchnera aphidicola subsp. Schizaphis graminum (strain Sg).